We begin with the raw amino-acid sequence, 359 residues long: Type-1 angiotensin II receptor B (359 aa).

The Extracellular segment spans residues 1–25 (MTLNSSTEDGIKRIQDDCPKAGRHN). The N-linked (GlcNAc...) asparagine glycan is linked to N4. Q15 and D17 together coordinate angiotensin II. 2 disulfides stabilise this stretch: C18–C274 and C101–C180. A helical membrane pass occupies residues 26–55 (YIFVMIPTLYSIIFVVGIFGNSLVVIVIYF). Topologically, residues 56–61 (YMKLKT) are cytoplasmic. Residues 62-89 (VASVFLLNLALADLCFLLTLPLWAVYTA) traverse the membrane as a helical segment. Residues 90 to 98 (MEYRWPFGN) lie on the Extracellular side of the membrane. Residues 99-125 (HLCKIASASVSFNLYASVFLLTCLSID) traverse the membrane as a helical segment. Over 126–141 (RYLAIVHPMKSRLRRT) the chain is Cytoplasmic. Residues 142 to 165 (MLVAKVTCIIIWLMAGLASLPAVI) form a helical membrane-spanning segment. Topologically, residues 166-190 (YRNVYFIENTNITVCAFHYESQNST) are extracellular. An angiotensin II-binding site is contributed by R167. N176 carries an N-linked (GlcNAc...) asparagine glycan. Angiotensin II is bound by residues F182, H183, and Y184. Residue N188 is glycosylated (N-linked (GlcNAc...) asparagine). Residues 191–216 (LPIGLGLTKNILGFVFPFLIILTSYT) traverse the membrane as a helical segment. K199 contacts angiotensin II. At 217–239 (LIWKALKKAYKIQKNTPRNDDIF) the chain is on the cytoplasmic side. The helical transmembrane segment at 240-268 (RIIMAIVLFFFFSWVPHQIFTFLDVLIQL) threads the bilayer. The Extracellular portion of the chain corresponds to 269-278 (GIIRDCEIAD). A helical membrane pass occupies residues 279–304 (IVDTAMPITICIAYFNNCLNPLFYGF). Residues 305–359 (LGKKFKKYFLQLLKYIPPTAKSHAGLSTKMSTLSYRPSDNMSSSAKKSASFFEVE) are Cytoplasmic-facing. The disordered stretch occupies residues 339-359 (YRPSDNMSSSAKKSASFFEVE). Residues 346 to 359 (SSSAKKSASFFEVE) are compositionally biased toward low complexity.

Belongs to the G-protein coupled receptor 1 family. As to quaternary structure, interacts with MAS1. Interacts with ARRB1. Interacts with FLNA (via filamin repeat 21); increases PKA-mediated phosphorylation of FLNA. In terms of processing, C-terminal Ser or Thr residues may be phosphorylated. In terms of tissue distribution, is expressed in the liver, kidney, aorta, lung, uterus, ovary, spleen, heart, and vascular smooth muscle cell. Expressed most abundantly in the adrenal gland.

The protein localises to the cell membrane. Receptor for angiotensin II, a vasoconstricting peptide, which acts as a key regulator of blood pressure and sodium retention by the kidney. The activated receptor in turn couples to G-alpha proteins G(q) (GNAQ, GNA11, GNA14 or GNA15) and thus activates phospholipase C and increases the cytosolic Ca(2+) concentrations, which in turn triggers cellular responses such as stimulation of protein kinase C. In Rattus norvegicus (Rat), this protein is Type-1 angiotensin II receptor B (Agtr1b).